The sequence spans 104 residues: Large ribosomal subunit protein bL21 (104 aa).

It belongs to the bacterial ribosomal protein bL21 family. As to quaternary structure, part of the 50S ribosomal subunit. Contacts protein L20.

Functionally, this protein binds to 23S rRNA in the presence of protein L20. This is Large ribosomal subunit protein bL21 from Francisella philomiragia subsp. philomiragia (strain ATCC 25017 / CCUG 19701 / FSC 153 / O#319-036).